The primary structure comprises 399 residues: MEQEIISAVQDIIDFINTRGPTKVFVIDSHFKNNRSITPVWTKNDLSLVAFIKKFPEYFIIGTDLIVSHKNIPIDFQTIIQSWNLVEDDFALTEKIVGKKLTMFEFPNNLDIIVTSDFQIVDNWIENNIYDLKQEIIGLDTETLISGKSEKISIIQLSTSKHNIIIQVNQMNTLPQNLNKVFFDESIIKVGVAIDIDAKKLLQYFPTINQIKKTLDLSDLFKQTNFTKHISINPKESIGLKILAAHVLDLYIENKGDSEIKKSNWNNPVLTSDQVKYAITDSYLSLMIYNELQLMTNNLDVKNLLKNFCHIDESSVKKNSKNNLTRRELEQKEQERRLKSIESKIKKWLKEDDSLTFEFESMNAFYRRHVHTFVEKIPELSSETKGTDPNKYVIITRHC.

The 3'-5' exonuclease domain maps to 118 to 297; it reads FQIVDNWIEN…IYNELQLMTN (180 aa). Residues 335–399 enclose the R3H domain; it reads ERRLKSIESK…NKYVIITRHC (65 aa).

The sequence is that of Putative 3'-5' exonuclease R431 from Acanthamoeba polyphaga (Amoeba).